We begin with the raw amino-acid sequence, 106 residues long: Large ribosomal subunit protein P2A (106 aa).

Lys2 participates in a covalent cross-link: Glycyl lysine isopeptide (Lys-Gly) (interchain with G-Cter in ubiquitin). At Thr16 the chain carries Phosphothreonine. Ser40 and Ser43 each carry phosphoserine. Lys48 is covalently cross-linked (Glycyl lysine isopeptide (Lys-Gly) (interchain with G-Cter in ubiquitin)). Position 49 is a phosphoserine (Ser49). A compositionally biased stretch (low complexity) spans 65 to 82 (PAAGPASAGGAAAASGDA). Positions 65-106 (PAAGPASAGGAAAASGDAAAEEEKEEEAAEESDDDMGFGLFD) are disordered. A compositionally biased stretch (acidic residues) spans 83 to 100 (AAEEEKEEEAAEESDDDM). Ser96 bears the Phosphoserine mark.

It belongs to the eukaryotic ribosomal protein P1/P2 family. As to quaternary structure, component of the large ribosomal subunit (LSU). Mature yeast ribosomes consist of a small (40S) and a large (60S) subunit. The 40S small subunit contains 1 molecule of ribosomal RNA (18S rRNA) and 33 different proteins (encoded by 57 genes). The large 60S subunit contains 3 rRNA molecules (25S, 5.8S and 5S rRNA) and 46 different proteins (encoded by 81 genes). The 5 acidic ribosomal P-proteins form the stalk structure of the 60S subunit. They are organized as a pentameric complex in which uL10/P0 interacts with 2 heterodimers, P1A-P2B and P1B-P2A. Phosphorylation is not involved in the interaction of the acidic P proteins with the ribosome, however it is suggested to affect the ribosome activity and to participate in a possible ribosome regulatory mechanism. Post-translationally, the N-terminus is not modified.

The protein localises to the cytoplasm. In terms of biological role, component of the ribosome, a large ribonucleoprotein complex responsible for the synthesis of proteins in the cell. The small ribosomal subunit (SSU) binds messenger RNAs (mRNAs) and translates the encoded message by selecting cognate aminoacyl-transfer RNA (tRNA) molecules. The large subunit (LSU) contains the ribosomal catalytic site termed the peptidyl transferase center (PTC), which catalyzes the formation of peptide bonds, thereby polymerizing the amino acids delivered by tRNAs into a polypeptide chain. The nascent polypeptides leave the ribosome through a tunnel in the LSU and interact with protein factors that function in enzymatic processing, targeting, and the membrane insertion of nascent chains at the exit of the ribosomal tunnel. The chain is Large ribosomal subunit protein P2A from Saccharomyces cerevisiae (strain ATCC 204508 / S288c) (Baker's yeast).